We begin with the raw amino-acid sequence, 339 residues long: Anthranilate phosphoribosyltransferase (339 aa).

Residues G82, G85–D86, N92–T95, K110–S118, and S122 each bind 5-phospho-alpha-D-ribose 1-diphosphate. Position 82 (G82) interacts with anthranilate. S94 serves as a coordination point for Mg(2+). N113 contacts anthranilate. R168 serves as a coordination point for anthranilate. The Mg(2+) site is built by D227 and E228.

This sequence belongs to the anthranilate phosphoribosyltransferase family. As to quaternary structure, homodimer. The cofactor is Mg(2+).

The enzyme catalyses N-(5-phospho-beta-D-ribosyl)anthranilate + diphosphate = 5-phospho-alpha-D-ribose 1-diphosphate + anthranilate. Its pathway is amino-acid biosynthesis; L-tryptophan biosynthesis; L-tryptophan from chorismate: step 2/5. Its function is as follows. Catalyzes the transfer of the phosphoribosyl group of 5-phosphorylribose-1-pyrophosphate (PRPP) to anthranilate to yield N-(5'-phosphoribosyl)-anthranilate (PRA). This Ruthia magnifica subsp. Calyptogena magnifica protein is Anthranilate phosphoribosyltransferase.